A 703-amino-acid chain; its full sequence is Antigen peptide transporter 2 (703 aa).

The Lumenal portion of the chain corresponds to methionine 1–proline 6. A helical transmembrane segment spans residues arginine 7–leucine 27. Over glycine 28–glycine 56 the chain is Cytoplasmic. A helical membrane pass occupies residues glycine 57–phenylalanine 77. The Lumenal portion of the chain corresponds to serine 78–serine 98. A helical transmembrane segment spans residues tryptophan 99–leucine 119. Over serine 120–aspartate 148 the chain is Cytoplasmic. Residues leucine 149–isoleucine 169 form a helical membrane-spanning segment. An ABC transmembrane type-1 domain is found at leucine 152–serine 435. At proline 170–aspartate 187 the chain is on the lumenal side. Residues alanine 188 to glycine 208 traverse the membrane as a helical segment. At cysteine 209–leucine 266 the chain is on the cytoplasmic side. A helical transmembrane segment spans residues asparagine 267–glutamine 287. Residues valine 288 to threonine 293 are Lumenal-facing. The chain crosses the membrane as a helical span at residues phenylalanine 294–histidine 314. Residues proline 301–valine 389 form a part of the peptide-binding site region. Over glutamine 315 to serine 374 the chain is Cytoplasmic. A helical membrane pass occupies residues leucine 375 to glycine 395. Over valine 396 to glycine 408 the chain is Lumenal. The helical transmembrane segment at leucine 409–methionine 429 threads the bilayer. The segment at leucine 414–methionine 433 is part of the peptide-binding site. Residues tyrosine 430–alanine 703 are Cytoplasmic-facing. The ABC transporter domain occupies valine 468–glutamate 702. Glycine 503–serine 510 lines the ATP pocket.

It belongs to the ABC transporter superfamily. ABCB family. MHC peptide exporter (TC 3.A.1.209) subfamily. As to quaternary structure, heterodimer of TAP1 and TAP2 (TAP1-TAP2). A component of the peptide loading complex (PLC), interacts via TAPBP with MHCI heterodimer; this interaction mediates peptide-MHCI assembly. The cofactor is Mg(2+).

It localises to the endoplasmic reticulum membrane. The enzyme catalyses a peptide antigen(in) + ATP + H2O = a peptide antigen(out) + ADP + phosphate + H(+). In terms of biological role, ABC transporter associated with antigen processing. In complex with TAP1 mediates unidirectional translocation of peptide antigens from cytosol to endoplasmic reticulum (ER) for loading onto MHC class I (MHCI) molecules. Uses the chemical energy of ATP to export peptides against the concentration gradient. During the transport cycle alternates between 'inward-facing' state with peptide binding site facing the cytosol to 'outward-facing' state with peptide binding site facing the ER lumen. Peptide antigen binding to ATP-loaded TAP1-TAP2 induces a switch to hydrolysis-competent 'outward-facing' conformation ready for peptide loading onto nascent MHCI molecules. Subsequently ATP hydrolysis resets the transporter to the 'inward facing' state for a new cycle. As a component of the peptide loading complex (PLC), acts as a molecular scaffold essential for peptide-MHCI assembly and antigen presentation. The protein is Antigen peptide transporter 2 (Tap2) of Rattus norvegicus (Rat).